The primary structure comprises 73 residues: Protein SlyX homolog (73 aa).

Belongs to the SlyX family.

The protein is Protein SlyX homolog of Haemophilus influenzae (strain PittEE).